A 615-amino-acid polypeptide reads, in one-letter code: DNA mismatch repair protein MutL (615 aa).

Residues 362-397 are disordered; the sequence is HFAEPAVREPVAPRYSPAPASGGRPAASWPNAQPGY. Residues 378–391 show a composition bias toward low complexity; it reads PAPASGGRPAASWP.

Belongs to the DNA mismatch repair MutL/HexB family.

Functionally, this protein is involved in the repair of mismatches in DNA. It is required for dam-dependent methyl-directed DNA mismatch repair. May act as a 'molecular matchmaker', a protein that promotes the formation of a stable complex between two or more DNA-binding proteins in an ATP-dependent manner without itself being part of a final effector complex. This Escherichia fergusonii (strain ATCC 35469 / DSM 13698 / CCUG 18766 / IAM 14443 / JCM 21226 / LMG 7866 / NBRC 102419 / NCTC 12128 / CDC 0568-73) protein is DNA mismatch repair protein MutL.